Here is a 427-residue protein sequence, read N- to C-terminus: Histidinol dehydrogenase (427 aa).

Residues tyrosine 127, glutamine 185, and asparagine 208 each contribute to the NAD(+) site. Residues serine 232, glutamine 254, and histidine 257 each coordinate substrate. Zn(2+)-binding residues include glutamine 254 and histidine 257. Catalysis depends on proton acceptor residues glutamate 321 and histidine 322. Substrate is bound by residues histidine 322, aspartate 355, glutamate 409, and histidine 414. Aspartate 355 is a binding site for Zn(2+). A Zn(2+)-binding site is contributed by histidine 414.

It belongs to the histidinol dehydrogenase family. Requires Zn(2+) as cofactor.

The catalysed reaction is L-histidinol + 2 NAD(+) + H2O = L-histidine + 2 NADH + 3 H(+). Its pathway is amino-acid biosynthesis; L-histidine biosynthesis; L-histidine from 5-phospho-alpha-D-ribose 1-diphosphate: step 9/9. Catalyzes the sequential NAD-dependent oxidations of L-histidinol to L-histidinaldehyde and then to L-histidine. This is Histidinol dehydrogenase from Haemophilus influenzae (strain 86-028NP).